The following is an 89-amino-acid chain: Teretoxin Tan6.8 (89 aa).

The N-terminal stretch at 1–21 (MRLLLILLLLTPVILAGSLDE) is a signal peptide. The tract at residues 22 to 42 (EPNNADGANAASFTADQEGRH) is disordered. The propeptide occupies 22 to 44 (EPNNADGANAASFTADQEGRHKR).

Contains 3 disulfide bonds. Expressed by the venom duct.

The protein localises to the secreted. This Terebra anilis (Auger snail) protein is Teretoxin Tan6.8.